The primary structure comprises 877 residues: Leucine--tRNA ligase (877 aa).

The 'HIGH' region motif lies at 48–58 (PYPSGKLHMGH). A 'KMSKS' region motif is present at residues 636-640 (KMSKS). Position 639 (Lys-639) interacts with ATP.

This sequence belongs to the class-I aminoacyl-tRNA synthetase family.

It is found in the cytoplasm. It catalyses the reaction tRNA(Leu) + L-leucine + ATP = L-leucyl-tRNA(Leu) + AMP + diphosphate. In Ralstonia nicotianae (strain ATCC BAA-1114 / GMI1000) (Ralstonia solanacearum), this protein is Leucine--tRNA ligase.